A 230-amino-acid polypeptide reads, in one-letter code: Ribose-5-phosphate isomerase A (230 aa).

Residues 31 to 34 (TGST), 87 to 90 (DGAD), and 100 to 103 (KGGG) contribute to the substrate site. The Proton acceptor role is filled by glutamate 109. Lysine 127 contacts substrate.

The protein belongs to the ribose 5-phosphate isomerase family. In terms of assembly, homodimer.

It carries out the reaction aldehydo-D-ribose 5-phosphate = D-ribulose 5-phosphate. Its pathway is carbohydrate degradation; pentose phosphate pathway; D-ribose 5-phosphate from D-ribulose 5-phosphate (non-oxidative stage): step 1/1. Catalyzes the reversible conversion of ribose-5-phosphate to ribulose 5-phosphate. The sequence is that of Ribose-5-phosphate isomerase A from Lactobacillus delbrueckii subsp. bulgaricus (strain ATCC 11842 / DSM 20081 / BCRC 10696 / JCM 1002 / NBRC 13953 / NCIMB 11778 / NCTC 12712 / WDCM 00102 / Lb 14).